Reading from the N-terminus, the 93-residue chain is Aspartyl/glutamyl-tRNA(Asn/Gln) amidotransferase subunit C (93 aa).

It belongs to the GatC family. In terms of assembly, heterotrimer of A, B and C subunits.

The catalysed reaction is L-glutamyl-tRNA(Gln) + L-glutamine + ATP + H2O = L-glutaminyl-tRNA(Gln) + L-glutamate + ADP + phosphate + H(+). It catalyses the reaction L-aspartyl-tRNA(Asn) + L-glutamine + ATP + H2O = L-asparaginyl-tRNA(Asn) + L-glutamate + ADP + phosphate + 2 H(+). Allows the formation of correctly charged Asn-tRNA(Asn) or Gln-tRNA(Gln) through the transamidation of misacylated Asp-tRNA(Asn) or Glu-tRNA(Gln) in organisms which lack either or both of asparaginyl-tRNA or glutaminyl-tRNA synthetases. The reaction takes place in the presence of glutamine and ATP through an activated phospho-Asp-tRNA(Asn) or phospho-Glu-tRNA(Gln). In Nautilia profundicola (strain ATCC BAA-1463 / DSM 18972 / AmH), this protein is Aspartyl/glutamyl-tRNA(Asn/Gln) amidotransferase subunit C.